We begin with the raw amino-acid sequence, 211 residues long: Large ribosomal subunit protein eL13 (211 aa).

Belongs to the eukaryotic ribosomal protein eL13 family. In terms of assembly, component of the 60S large ribosomal subunit (LSU).

The protein localises to the cytoplasm. Its function is as follows. Component of the ribosome, a large ribonucleoprotein complex responsible for the synthesis of proteins in the cell. The small ribosomal subunit (SSU) binds messenger RNAs (mRNAs) and translates the encoded message by selecting cognate aminoacyl-transfer RNA (tRNA) molecules. The large subunit (LSU) contains the ribosomal catalytic site termed the peptidyl transferase center (PTC), which catalyzes the formation of peptide bonds, thereby polymerizing the amino acids delivered by tRNAs into a polypeptide chain. The nascent polypeptides leave the ribosome through a tunnel in the LSU and interact with protein factors that function in enzymatic processing, targeting, and the membrane insertion of nascent chains at the exit of the ribosomal tunnel. As part of the LSU, it is probably required for its formation and the maturation of rRNAs. The protein is Large ribosomal subunit protein eL13 (rpl13) of Ictalurus punctatus (Channel catfish).